The sequence spans 414 residues: 2,3-diketo-5-methylthiopentyl-1-phosphate enolase (414 aa).

Residue K99 is the Proton acceptor of the active site. Residues K148, 174 to 177 (KDDE), H265, G338, and 360 to 361 (GG) contribute to the substrate site. The Mg(2+) site is built by K174, D176, and E177. Position 174 is an N6-carboxylysine (K174).

This sequence belongs to the RuBisCO large chain family. Type IV subfamily. Homodimer. Requires Mg(2+) as cofactor.

It carries out the reaction 5-methylsulfanyl-2,3-dioxopentyl phosphate = 2-hydroxy-5-methylsulfanyl-3-oxopent-1-enyl phosphate. The protein operates within amino-acid biosynthesis; L-methionine biosynthesis via salvage pathway; L-methionine from S-methyl-5-thio-alpha-D-ribose 1-phosphate: step 3/6. In terms of biological role, catalyzes the enolization of 2,3-diketo-5-methylthiopentyl-1-phosphate (DK-MTP-1-P) into 2-hydroxy-3-keto-5-methylthiopentenyl-1-phosphate (HK-MTPenyl-1-P). This is 2,3-diketo-5-methylthiopentyl-1-phosphate enolase from Bacillus cereus (strain B4264).